The following is a 457-amino-acid chain: Bifunctional protein GlmU (457 aa).

The pyrophosphorylase stretch occupies residues 1 to 236; that stretch reads MDQDACTHSA…DWHFLGVNTP (236 aa). UDP-N-acetyl-alpha-D-glucosamine-binding positions include 14-17, K28, Q79, and 84-85; these read LAAG and GT. D110 is a binding site for Mg(2+). UDP-N-acetyl-alpha-D-glucosamine-binding residues include G145, E159, N176, and N234. Residue N234 participates in Mg(2+) binding. Residues 237–257 form a linker region; it reads KDLSYVESIQQAFIIEKLLQS. Residues 258-457 form an N-acetyltransferase region; sequence GVIIHSPESV…GKQKNFSKRK (200 aa). 2 residues coordinate UDP-N-acetyl-alpha-D-glucosamine: R340 and K358. The active-site Proton acceptor is H370. UDP-N-acetyl-alpha-D-glucosamine-binding residues include Y373 and N384. Residues A387, 393–394, S412, A430, and R447 contribute to the acetyl-CoA site; that span reads NY.

This sequence in the N-terminal section; belongs to the N-acetylglucosamine-1-phosphate uridyltransferase family. The protein in the C-terminal section; belongs to the transferase hexapeptide repeat family. In terms of assembly, homotrimer. Mg(2+) serves as cofactor.

The protein resides in the cytoplasm. The catalysed reaction is alpha-D-glucosamine 1-phosphate + acetyl-CoA = N-acetyl-alpha-D-glucosamine 1-phosphate + CoA + H(+). It carries out the reaction N-acetyl-alpha-D-glucosamine 1-phosphate + UTP + H(+) = UDP-N-acetyl-alpha-D-glucosamine + diphosphate. It participates in nucleotide-sugar biosynthesis; UDP-N-acetyl-alpha-D-glucosamine biosynthesis; N-acetyl-alpha-D-glucosamine 1-phosphate from alpha-D-glucosamine 6-phosphate (route II): step 2/2. Its pathway is nucleotide-sugar biosynthesis; UDP-N-acetyl-alpha-D-glucosamine biosynthesis; UDP-N-acetyl-alpha-D-glucosamine from N-acetyl-alpha-D-glucosamine 1-phosphate: step 1/1. It functions in the pathway bacterial outer membrane biogenesis; LPS lipid A biosynthesis. In terms of biological role, catalyzes the last two sequential reactions in the de novo biosynthetic pathway for UDP-N-acetylglucosamine (UDP-GlcNAc). The C-terminal domain catalyzes the transfer of acetyl group from acetyl coenzyme A to glucosamine-1-phosphate (GlcN-1-P) to produce N-acetylglucosamine-1-phosphate (GlcNAc-1-P), which is converted into UDP-GlcNAc by the transfer of uridine 5-monophosphate (from uridine 5-triphosphate), a reaction catalyzed by the N-terminal domain. The protein is Bifunctional protein GlmU of Lawsonia intracellularis (strain PHE/MN1-00).